A 233-amino-acid polypeptide reads, in one-letter code: Large ribosomal subunit protein uL1 (233 aa).

This sequence belongs to the universal ribosomal protein uL1 family. Part of the 50S ribosomal subunit.

Functionally, binds directly to 23S rRNA. The L1 stalk is quite mobile in the ribosome, and is involved in E site tRNA release. In terms of biological role, protein L1 is also a translational repressor protein, it controls the translation of the L11 operon by binding to its mRNA. This chain is Large ribosomal subunit protein uL1, found in Finegoldia magna (strain ATCC 29328 / DSM 20472 / WAL 2508) (Peptostreptococcus magnus).